The primary structure comprises 543 residues: Chaperonin GroEL (543 aa).

Residues 29–32, K50, 86–90, G415, and D495 each bind ATP; these read TLGP and DGTTT.

It belongs to the chaperonin (HSP60) family. As to quaternary structure, forms a cylinder of 14 subunits composed of two heptameric rings stacked back-to-back. Interacts with the co-chaperonin GroES.

It localises to the cytoplasm. The enzyme catalyses ATP + H2O + a folded polypeptide = ADP + phosphate + an unfolded polypeptide.. Its function is as follows. Together with its co-chaperonin GroES, plays an essential role in assisting protein folding. The GroEL-GroES system forms a nano-cage that allows encapsulation of the non-native substrate proteins and provides a physical environment optimized to promote and accelerate protein folding. This chain is Chaperonin GroEL, found in Flavobacterium johnsoniae (strain ATCC 17061 / DSM 2064 / JCM 8514 / BCRC 14874 / CCUG 350202 / NBRC 14942 / NCIMB 11054 / UW101) (Cytophaga johnsonae).